The following is a 310-amino-acid chain: 300 kDa antigen AG231 (310 aa).

Residues V1–C23 form a 4 X 6 AA tandem repeats of V-V-T-G-S-C region. Residues V29–H106 are 13 X 6 AA tandem repeats of V-V-[TI]-[QE]-E-[PH]. Residues V53–V101 show a composition bias toward low complexity. Positions V53–K310 are disordered. 2 stretches are compositionally biased toward basic and acidic residues: residues V103–E114 and N147–S160. A 45 AA repeat 1 repeat occupies I107–K152. A compositionally biased stretch (polar residues) spans T176 to I190. The 13 X 6 AA approximate tandem repeats stretch occupies residues V188–H265. Residues Q191 to P235 show a composition bias toward low complexity. Over residues I236–Q263 the composition is skewed to polar residues. Residues E264–E273 show a composition bias toward basic and acidic residues. A 45 AA repeat 2 repeat occupies A266–K310.

In Plasmodium falciparum (isolate FC27 / Papua New Guinea), this protein is 300 kDa antigen AG231 (FIRA).